A 316-amino-acid polypeptide reads, in one-letter code: Ribosomal RNA small subunit methyltransferase H (316 aa).

S-adenosyl-L-methionine-binding positions include 39-41, aspartate 56, phenylalanine 82, aspartate 103, and glutamine 110; that span reads GGH.

The protein belongs to the methyltransferase superfamily. RsmH family.

The protein resides in the cytoplasm. The catalysed reaction is cytidine(1402) in 16S rRNA + S-adenosyl-L-methionine = N(4)-methylcytidine(1402) in 16S rRNA + S-adenosyl-L-homocysteine + H(+). Specifically methylates the N4 position of cytidine in position 1402 (C1402) of 16S rRNA. The sequence is that of Ribosomal RNA small subunit methyltransferase H from Methylacidiphilum infernorum (isolate V4) (Methylokorus infernorum (strain V4)).